The primary structure comprises 495 residues: MNKEILAVVEAVSNEKSLPREKIFEALEIALATATKKKYEQEIDVRVSINRKTGNFSTFRRWMVVDIVVHPTKEITLEAACFEGEQVKINDYVEDKIESVNFDRITTQTAKQVIVQKVREAERAMLVDQFRKHIGQIITGIVKKISRDNLTLDLGNNAEALILREGMLPRENFRPGDRIRGILYGVYPEARGAQLFLSRSKTEMLIELFRIEVPEIGEEVIEIKAAARDPGSRAKIAVKTNDKRIDPIGACVGMRGARVQAVSSELCGERIDIILWDDNPAQFVINAMAPADVVSIIVDEDHHTMDIAVDSSNLAQAIGRNGQNVRLASQISGWELNVMTTEDLRSKHKEEAYAAFNIFKKNLNVSEKVIKTLVKEGFSSLEELAYIPLNELLEINNLTEREVQLVREGAKNGLLLLELDQKNQIKNKKIEQALLNVNGMNELLALKLAEKNIFTVEELANQGIDDLIDIENLNSEQAGLLIMAARNICWFSSKV.

In terms of domain architecture, S1 motif spans 135–200 (GQIITGIVKK…RGAQLFLSRS (66 aa)). A KH domain is found at 302-370 (HHTMDIAVDS…KNLNVSEKVI (69 aa)). Tandem repeats lie at residues 364-414 (NVSE…KNGL) and 439-489 (GMNE…RNIC). The interval 364–489 (NVSEKVIKTL…LLIMAARNIC (126 aa)) is 2 X 51 AA approximate repeats.

The protein belongs to the NusA family. As to quaternary structure, monomer. Binds directly to the core enzyme of the DNA-dependent RNA polymerase and to nascent RNA.

The protein localises to the cytoplasm. In terms of biological role, participates in both transcription termination and antitermination. The protein is Transcription termination/antitermination protein NusA of Buchnera aphidicola subsp. Schizaphis graminum (strain Sg).